Reading from the N-terminus, the 253-residue chain is uncharacterized protein (253 aa).

NADP(+) contacts are provided by Ile17, Ser36, Asp62, Asn89, Tyr158, Lys162, Val191, and Thr193. Tyr158 serves as the catalytic Proton donor. Residue Lys162 is the Lowers pKa of active site Tyr of the active site.

This sequence belongs to the short-chain dehydrogenases/reductases (SDR) family.

Its subcellular location is the cytoplasm. It is found in the nucleus. This is an uncharacterized protein from Schizosaccharomyces pombe (strain 972 / ATCC 24843) (Fission yeast).